The primary structure comprises 1152 residues: Alpha-mannosidase 2x (1152 aa).

The Cytoplasmic portion of the chain corresponds to 1-5; that stretch reads MKLKK. The chain crosses the membrane as a helical; Signal-anchor for type II membrane protein span at residues 6–26; sequence QVTVCGAAIFCVAVFSLYLML. The Lumenal segment spans residues 27–796; it reads DRVQHDPARH…VDEEQEQQME (770 aa). Residues 43 to 74 are a coiled coil; that stretch reads PRSQISVLQNRIEQLEQLLEENHDIISRIKDS. Zn(2+) contacts are provided by H175 and D177. The N-linked (GlcNAc...) asparagine glycan is linked to N225. D289 is a Zn(2+) binding site. The active-site Nucleophile is D289. Residue N305 is glycosylated (N-linked (GlcNAc...) asparagine). A Zn(2+)-binding site is contributed by H569.

It belongs to the glycosyl hydrolase 38 family. Homodimer; disulfide-linked. Interacts with MGAT4D. Zn(2+) serves as cofactor.

It localises to the golgi apparatus membrane. It catalyses the reaction N(4)-{beta-D-GlcNAc-(1-&gt;2)-alpha-D-Man-(1-&gt;3)-[alpha-D-Man-(1-&gt;3)-[alpha-D-Man-(1-&gt;6)]-alpha-D-Man-(1-&gt;6)]-beta-D-Man-(1-&gt;4)-beta-D-GlcNAc-(1-&gt;4)-beta-D-GlcNAc}-L-asparaginyl-[protein] + 2 H2O = 2 alpha-D-mannopyranose + an N(4)-{beta-D-GlcNAc-(1-&gt;2)-alpha-D-Man-(1-&gt;3)-[alpha-D-Man-(1-&gt;6)]-beta-D-Man-(1-&gt;4)-beta-D-GlcNAc-(1-&gt;4)-beta-D-GlcNAc}-L-asparaginyl-[protein]. It functions in the pathway protein modification; protein glycosylation. Functionally, catalyzes the first committed step in the biosynthesis of complex N-glycans. It controls conversion of high mannose to complex N-glycans; the final hydrolytic step in the N-glycan maturation pathway. The polypeptide is Alpha-mannosidase 2x (Man2a2) (Mus musculus (Mouse)).